A 79-amino-acid chain; its full sequence is Ixosin (79 aa).

Positions 1–56 are cleaved as a propeptide — removed in mature form; it reads MSAHKVQIGLSSGQFRVALQVPSVRLKGLGSFHTGSIVLPSQGSLREDQISLHNQD.

Has antifungal activity against C.albicans. Has antibacterial activity against the Gram-positive bacterium S.aureus and the Gram-negative bacterium E.coli. Lacks hemolytic activity against rabbit erythrocytes. The sequence is that of Ixosin from Ixodes sinensis (Hard tick).